The following is a 49-amino-acid chain: Large ribosomal subunit protein bL32 (49 aa).

The protein belongs to the bacterial ribosomal protein bL32 family.

The polypeptide is Large ribosomal subunit protein bL32 (Helicobacter hepaticus (strain ATCC 51449 / 3B1)).